Consider the following 149-residue polypeptide: Urease accessory protein UreE (149 aa).

The protein belongs to the UreE family.

Its subcellular location is the cytoplasm. Its function is as follows. Involved in urease metallocenter assembly. Binds nickel. Probably functions as a nickel donor during metallocenter assembly. The protein is Urease accessory protein UreE of Prochlorococcus marinus (strain MIT 9301).